The chain runs to 428 residues: Probable protein phosphatase 2C 5 (428 aa).

The 273-residue stretch at Arg-25–Ile-297 folds into the PPM-type phosphatase domain. Mn(2+) contacts are provided by Asp-73, Gly-74, Asp-249, and Asp-288.

Belongs to the PP2C family. Requires Mg(2+) as cofactor. Mn(2+) serves as cofactor.

The enzyme catalyses O-phospho-L-seryl-[protein] + H2O = L-seryl-[protein] + phosphate. It catalyses the reaction O-phospho-L-threonyl-[protein] + H2O = L-threonyl-[protein] + phosphate. The chain is Probable protein phosphatase 2C 5 from Arabidopsis thaliana (Mouse-ear cress).